The sequence spans 188 residues: GMP synthase [glutamine-hydrolyzing] subunit A (188 aa).

Positions 1-188 (MIVILDNGGQ…FCKVCGYKFE (188 aa)) constitute a Glutamine amidotransferase type-1 domain. C76 functions as the Nucleophile in the catalytic mechanism. Catalysis depends on residues H163 and E165.

In terms of assembly, heterodimer composed of a glutamine amidotransferase subunit (A) and a GMP-binding subunit (B).

The enzyme catalyses XMP + L-glutamine + ATP + H2O = GMP + L-glutamate + AMP + diphosphate + 2 H(+). It functions in the pathway purine metabolism; GMP biosynthesis; GMP from XMP (L-Gln route): step 1/1. Catalyzes the synthesis of GMP from XMP. This Methanocaldococcus jannaschii (strain ATCC 43067 / DSM 2661 / JAL-1 / JCM 10045 / NBRC 100440) (Methanococcus jannaschii) protein is GMP synthase [glutamine-hydrolyzing] subunit A.